Reading from the N-terminus, the 141-residue chain is MSRLMIVLVVLLSLAVAGLFLVKHKNASLRASLDRANNVASGQQTTITMLKNQLHVALTRADKNELAQVALRQELENAAKREAQREKTITRLLNENEDFRRWYGADLPDAVRRLHQRPACTDASDCPQRMPESEPLPDAGQ.

Residues 1 to 17 (MSRLMIVLVVLLSLAVA) form a helical; Signal-anchor for type II membrane protein membrane-spanning segment. The Periplasmic segment spans residues 18–141 (GLFLVKHKNA…ESEPLPDAGQ (124 aa)). A disordered region spans residues 119-141 (ACTDASDCPQRMPESEPLPDAGQ).

In terms of assembly, interacts (via C-terminus) with the spanin outer lipoprotein subunit (via C-terminus). Part of the spanin complex which spans the entire periplasmic space. The spanin complex is composed of spanin inner membrane subunit and spanin outer membrane subunit.

Its subcellular location is the host cell inner membrane. In terms of biological role, component of the spanin complex that disrupts the host outer membrane and participates in cell lysis during virus exit. The spanin complex conducts the final step in host lysis by disrupting the outer membrane after holin and endolysin action have permeabilized the inner membrane and degraded the host peptidoglycans. Host outer membrane disruption is possibly due to local fusion between the inner and outer membrane performed by the spanin complex. The chain is Probable spanin, inner membrane subunit (lysB) from Escherichia phage P2 (Bacteriophage P2).